Here is a 504-residue protein sequence, read N- to C-terminus: DnaJ homolog subfamily C member 3 (504 aa).

A signal peptide spans 1–31 (MVAPGSVGSRLGAVFPFLLVLVDLQYEGAEC). 9 TPR repeats span residues 37-70 (VEKH…DPDN), 72-104 (IAYY…KMDF), 105-138 (TAAR…NPSE), 154-187 (MQRL…CVWD), 188-221 (AELR…KSDN), 222-255 (TEAF…DQDH), 268-301 (LNKL…EPSV), 306-339 (VRSK…EPDN), and 340-373 (VNAL…NEND). Cys-248 and Cys-258 are oxidised to a cystine. Ser-274 carries the post-translational modification Phosphoserine. Cys-313 and Cys-329 form a disulfide bridge. The tract at residues 375–393 (QIREGLEKAQRLLKQSQKR) is flexible linker. In terms of domain architecture, J spans 394–462 (DYYKILGVKR…EMRKKFDDGE (69 aa)). Residues 451–481 (DPEMRKKFDDGEDPLDAESQQGGGGNPFHRS) are disordered.

In terms of assembly, interacts with EIF2AK4/GCN2; this interaction occurs under endoplasmic reticulum (ER) stress, hypothermic and amino acid starving stress conditions and inhibits EIF2AK4/GCN2 kinase activity. Interacts with EIF2AK3. Interacts with EIF2AK2. Forms a trimeric complex with DNAJB1 and HSPA8. Interacts with THAP12. Widely expressed, with high level in the liver.

The protein resides in the endoplasmic reticulum. Its function is as follows. Involved in the unfolded protein response (UPR) during endoplasmic reticulum (ER) stress. Acts as a negative regulator of the EIF2AK4/GCN2 kinase activity by preventing the phosphorylation of eIF-2-alpha at 'Ser-52' and hence attenuating general protein synthesis under ER stress, hypothermic and amino acid starving stress conditions. Co-chaperone of HSPA8/HSC70, it stimulates its ATPase activity. May inhibit both the autophosphorylation of EIF2AK2/PKR and the ability of EIF2AK2 to catalyze phosphorylation of the EIF2A. May inhibit EIF2AK3/PERK activity. The sequence is that of DnaJ homolog subfamily C member 3 (Dnajc3) from Mus musculus (Mouse).